Here is a 297-residue protein sequence, read N- to C-terminus: tRNA (guanine(37)-N(1))/4-demethylwyosine(37)-methyltransferase Taw22 (297 aa).

Residues Arg89, Phe106, and 128–129 each bind S-adenosyl-L-methionine; that span reads EL.

This sequence belongs to the class I-like SAM-binding methyltransferase superfamily. TRM5/TYW2 family.

The protein resides in the cytoplasm. It catalyses the reaction guanosine(37) in tRNA + S-adenosyl-L-methionine = N(1)-methylguanosine(37) in tRNA + S-adenosyl-L-homocysteine + H(+). The catalysed reaction is 4-demethylwyosine(37) in tRNA(Phe) + S-adenosyl-L-methionine = isowyosine(37) in tRNA(Phe) + S-adenosyl-L-homocysteine + H(+). Catalyzes both the N1-methylation of guanosine and the C7-methylation of 4-demethylwyosine (imG-14) at position 37 in tRNA(Phe). The protein is tRNA (guanine(37)-N(1))/4-demethylwyosine(37)-methyltransferase Taw22 of Nanoarchaeum equitans (strain Kin4-M).